The chain runs to 156 residues: uncharacterized protein (156 aa).

Helical transmembrane passes span 21-41, 54-74, and 80-100; these read GVLF…AISL, TICS…IDFA, and SVLV…WALF.

The protein localises to the membrane. This is an uncharacterized protein from Saccharomyces cerevisiae (strain ATCC 204508 / S288c) (Baker's yeast).